Reading from the N-terminus, the 87-residue chain is MIRVGLILCCIFIAGVFEASSADDMLTAHNLIKRSEVKPPSSSEFIGLMGRSEELTRRLIQHPGSMSETSKRGPPKKVSRRPYILKK.

Positions 1–22 (MIRVGLILCCIFIAGVFEASSA) are cleaved as a signal peptide. Residues 23–37 (DDMLTAHNLIKRSEV) constitute a propeptide that is removed on maturation. A Methionine amide modification is found at Met-49. Positions 52–87 (SEELTRRLIQHPGSMSETSKRGPPKKVSRRPYILKK) are excised as a propeptide. The segment at 61–87 (QHPGSMSETSKRGPPKKVSRRPYILKK) is disordered. The span at 73–87 (GPPKKVSRRPYILKK) shows a compositional bias: basic residues.

The protein belongs to the tachykinin family. Expressed in the posterior salivary gland and more specifically in the mucus-secreting gland cells.

The protein resides in the secreted. Its function is as follows. Tachykinins are active peptides which excite neurons, evoke behavioral responses, are potent vasodilators and secretagogues, and contract (directly or indirectly) many smooth muscles. This chain is Tachykinin-1, found in Octopus vulgaris (Common octopus).